Reading from the N-terminus, the 161-residue chain is Alpha-crystallin A chain (161 aa).

An N-acetylmethionine modification is found at Met1. The interval 1–53 (MDVTIQHPWFKRALGPFYHNRLFDQFFGEGLFEYDLLPFQSLFRTVLDSGISE) is required for complex formation with BFSP1 and BFSP2. A deamidated glutamine; partial mark is found at Gln6 and Gln40. A sHSP domain is found at 41–150 (SLFRTVLDSG…SHSERAIPVS (110 aa)). Lys87 is subject to N6-acetyllysine. His88 serves as a coordination point for Zn(2+). Deamidated asparagine; partial is present on Asn89. Zn(2+)-binding residues include Glu90 and His95. Ser110 bears the Phosphoserine mark. At Asn111 the chain carries Deamidated asparagine; partial. Cys119 and Cys130 form a disulfide bridge. Position 135 is a deamidated glutamine; partial (Gln135). The tract at residues 135–161 (QSGMDASHSERAIPVSREEKASSAPNS) is disordered. Residues 141–155 (SHSERAIPVSREEKA) show a composition bias toward basic and acidic residues. His142 lines the Zn(2+) pocket. Residue Ser150 is glycosylated (O-linked (GlcNAc) serine).

This sequence belongs to the small heat shock protein (HSP20) family. In terms of assembly, heteromer composed of three CRYAA and one CRYAB subunits. Inter-subunit bridging via zinc ions enhances stability, which is crucial as there is no protein turn over in the lens. Can also form homodimers and homotetramers (dimers of dimers) which serve as the building blocks of homooligomers. Within homooligomers, the zinc-binding motif is created from residues of 3 different molecules. His-88 and Glu-90 from one molecule are ligands of the zinc ion, and His-95 and His-142 residues from additional molecules complete the site with tetrahedral coordination geometry. Part of a complex required for lens intermediate filament formation composed of BFSP1, BFSP2 and CRYAA. Post-translationally, undergoes age-dependent proteolytical cleavage at the C-terminus.

It localises to the cytoplasm. Its subcellular location is the nucleus. Its function is as follows. Contributes to the transparency and refractive index of the lens. In its oxidized form (absence of intramolecular disulfide bond), acts as a chaperone, preventing aggregation of various proteins under a wide range of stress conditions. Required for the correct formation of lens intermediate filaments as part of a complex composed of BFSP1, BFSP2 and CRYAA. In Trichechus inunguis (Amazon manatee), this protein is Alpha-crystallin A chain (CRYAA).